Here is a 560-residue protein sequence, read N- to C-terminus: uncharacterized protein (560 aa).

Residues 1-17 (MEPKRKSGSLAKHDLPQ) lie on the Cytoplasmic side of the membrane. The chain crosses the membrane as a helical span at residues 18–38 (FYLLIMLYLAQGIPVGLAFGT). The Extracellular portion of the chain corresponds to 39 to 54 (VPFLLKSLAKETSFTS). Residues 55–75 (LGIFSMATYPYSLKIIWSPIV) form a helical membrane-spanning segment. Residues 76-88 (DSLYNKRIGRRRS) lie on the Cytoplasmic side of the membrane. Residues 89–109 (WIIPVQFVSGFVLWALGWCIS) form a helical membrane-spanning segment. Over 110–139 (QGIIFDGVDDAFHNRGNGTLHSVSIKNLTW) the chain is Extracellular. The helical transmembrane segment at 140–160 (WFGLLVFLCATQDIAVDGWAL) threads the bilayer. Residues 161-172 (TILSKESLSYAS) are Cytoplasmic-facing. Residues 173-193 (TAQTIGLNIGYFMSFTIFLSL) form a helical membrane-spanning segment. At 194–214 (NSSDFANKYFRNIPLDHGFIS) the chain is on the extracellular side. Residues 215-235 (LGGYMKFSGMLYIVITIYIIF) form a helical membrane-spanning segment. The Cytoplasmic segment spans residues 236 to 329 (CTKEKPYVEY…KLLEQGFKRE (94 aa)). A helical transmembrane segment spans residues 330 to 350 (DLAVTVLIDLPFEIIFGYYVV). The Extracellular portion of the chain corresponds to 351–374 (KWSSDKDPMIRDNRRLRNSTGTNK). Residues 375–395 (VIKFLVGDAGVLTPWLWGFLG) traverse the membrane as a helical segment. At 396 to 421 (RLAAAVLGSYVVKQFPKDGEISTGYF) the chain is on the cytoplasmic side. Residues 422 to 442 (CLVIFQHLLGSFMNTVQFIGI) form a helical membrane-spanning segment. Residues 443 to 521 (SAFHTRVADP…LNGTVTILRD (79 aa)) lie on the Extracellular side of the membrane. A helical membrane pass occupies residues 522-542 (GYYITNLICIVVGLFLYFGYL). At 543–560 (KRKILHLQSLPISSWRCT) the chain is on the cytoplasmic side.

The protein localises to the membrane. This is an uncharacterized protein from Saccharomyces cerevisiae (strain ATCC 204508 / S288c) (Baker's yeast).